Consider the following 157-residue polypeptide: 2-C-methyl-D-erythritol 2,4-cyclodiphosphate synthase (157 aa).

Positions 8 and 10 each coordinate a divalent metal cation. 4-CDP-2-C-methyl-D-erythritol 2-phosphate is bound by residues 8–10 and 34–35; these read DVH and HS. An a divalent metal cation-binding site is contributed by His-42. Residues 56–58, 61–65, 132–135, Phe-139, and Arg-142 contribute to the 4-CDP-2-C-methyl-D-erythritol 2-phosphate site; these read DIG, FPDNE, and TTTE.

The protein belongs to the IspF family. As to quaternary structure, homotrimer. A divalent metal cation serves as cofactor.

The enzyme catalyses 4-CDP-2-C-methyl-D-erythritol 2-phosphate = 2-C-methyl-D-erythritol 2,4-cyclic diphosphate + CMP. Its pathway is isoprenoid biosynthesis; isopentenyl diphosphate biosynthesis via DXP pathway; isopentenyl diphosphate from 1-deoxy-D-xylulose 5-phosphate: step 4/6. In terms of biological role, involved in the biosynthesis of isopentenyl diphosphate (IPP) and dimethylallyl diphosphate (DMAPP), two major building blocks of isoprenoid compounds. Catalyzes the conversion of 4-diphosphocytidyl-2-C-methyl-D-erythritol 2-phosphate (CDP-ME2P) to 2-C-methyl-D-erythritol 2,4-cyclodiphosphate (ME-CPP) with a corresponding release of cytidine 5-monophosphate (CMP). This Desulforamulus reducens (strain ATCC BAA-1160 / DSM 100696 / MI-1) (Desulfotomaculum reducens) protein is 2-C-methyl-D-erythritol 2,4-cyclodiphosphate synthase.